The following is a 328-amino-acid chain: uncharacterized protein (328 aa).

The protein belongs to the Gfo/Idh/MocA family.

This is an uncharacterized protein from Escherichia coli (strain K12).